We begin with the raw amino-acid sequence, 386 residues long: N-acetylneuraminate epimerase (386 aa).

Residues 1 to 29 (MGMQMKNFKKMMTLMALCLSVAITTSGYA) form the signal peptide. 7 Kelch repeats span residues 51-95 (VIYV…VFLN), 97-149 (ELYV…VKLN), 151-186 (TMVL…KVIY), 187-232 (NYFN…VMEN), 235-284 (LMLI…LAGA), 306-355 (QNYT…SYGD), and 357-386 (VFLI…LLIK). E241 functions as the Proton acceptor in the catalytic mechanism.

The protein belongs to the NanM family. In terms of assembly, homodimer.

Its subcellular location is the periplasm. It carries out the reaction N-acetyl-alpha-neuraminate = N-acetyl-beta-neuraminate. In terms of biological role, converts alpha-N-acetylneuranimic acid (Neu5Ac) to the beta-anomer, accelerating the equilibrium between the alpha- and beta-anomers. Probably facilitates sialidase-negative bacteria to compete successfully for limited amounts of extracellular Neu5Ac, which is likely taken up in the beta-anomer. In addition, the rapid removal of sialic acid from solution might be advantageous to the bacterium to damp down host responses. This is N-acetylneuraminate epimerase from Salmonella choleraesuis (strain SC-B67).